A 186-amino-acid chain; its full sequence is Tumor necrosis factor alpha-induced protein 8-like protein 1 (186 aa).

This sequence belongs to the TNFAIP8 family. In terms of assembly, interacts with FBXW5; TNFAIP8L1 competes with TSC2 to bind FBXW5 increasing TSC2 stability by preventing its ubiquitination. Detected in wide variety tissues, such as neurons in brain, hepatocytes, germ cells of female and male reproductive organs, muscular tissues and variety types of cells of the epithelial origin (at protein level).

The protein resides in the cytoplasm. Functionally, acts as a negative regulator of mTOR activity. The chain is Tumor necrosis factor alpha-induced protein 8-like protein 1 (Tnfaip8l1) from Mus musculus (Mouse).